A 309-amino-acid chain; its full sequence is Protein FdhE (309 aa).

It belongs to the FdhE family.

Its subcellular location is the cytoplasm. Functionally, necessary for formate dehydrogenase activity. The polypeptide is Protein FdhE (Escherichia coli O127:H6 (strain E2348/69 / EPEC)).